The sequence spans 260 residues: Hydroxyethylthiazole kinase 1 (260 aa).

Met39 provides a ligand contact to substrate. ATP contacts are provided by Arg115 and Thr160. Residue Gly187 coordinates substrate.

The protein belongs to the Thz kinase family. Mg(2+) is required as a cofactor.

The enzyme catalyses 5-(2-hydroxyethyl)-4-methylthiazole + ATP = 4-methyl-5-(2-phosphooxyethyl)-thiazole + ADP + H(+). The protein operates within cofactor biosynthesis; thiamine diphosphate biosynthesis; 4-methyl-5-(2-phosphoethyl)-thiazole from 5-(2-hydroxyethyl)-4-methylthiazole: step 1/1. In terms of biological role, catalyzes the phosphorylation of the hydroxyl group of 4-methyl-5-beta-hydroxyethylthiazole (THZ). The polypeptide is Hydroxyethylthiazole kinase 1 (Streptococcus pneumoniae serotype 19F (strain G54)).